We begin with the raw amino-acid sequence, 292 residues long: Diaminopimelate epimerase (292 aa).

Substrate-binding residues include asparagine 13, glutamine 46, and asparagine 66. The active-site Proton donor is cysteine 75. Substrate is bound by residues 76–77 (GN), asparagine 170, asparagine 203, and 221–222 (ER). Cysteine 230 serves as the catalytic Proton acceptor. 231–232 (GT) provides a ligand contact to substrate.

This sequence belongs to the diaminopimelate epimerase family. Homodimer.

It localises to the cytoplasm. The catalysed reaction is (2S,6S)-2,6-diaminopimelate = meso-2,6-diaminopimelate. It participates in amino-acid biosynthesis; L-lysine biosynthesis via DAP pathway; DL-2,6-diaminopimelate from LL-2,6-diaminopimelate: step 1/1. Functionally, catalyzes the stereoinversion of LL-2,6-diaminopimelate (L,L-DAP) to meso-diaminopimelate (meso-DAP), a precursor of L-lysine and an essential component of the bacterial peptidoglycan. The polypeptide is Diaminopimelate epimerase (Acidovorax ebreus (strain TPSY) (Diaphorobacter sp. (strain TPSY))).